A 405-amino-acid polypeptide reads, in one-letter code: Phosphopentomutase (405 aa).

Residues Asp-10, Asp-305, His-310, Asp-346, His-347, and His-358 each contribute to the Mn(2+) site.

It belongs to the phosphopentomutase family. Requires Mn(2+) as cofactor.

It localises to the cytoplasm. It catalyses the reaction 2-deoxy-alpha-D-ribose 1-phosphate = 2-deoxy-D-ribose 5-phosphate. It carries out the reaction alpha-D-ribose 1-phosphate = D-ribose 5-phosphate. It functions in the pathway carbohydrate degradation; 2-deoxy-D-ribose 1-phosphate degradation; D-glyceraldehyde 3-phosphate and acetaldehyde from 2-deoxy-alpha-D-ribose 1-phosphate: step 1/2. Isomerase that catalyzes the conversion of deoxy-ribose 1-phosphate (dRib-1-P) and ribose 1-phosphate (Rib-1-P) to deoxy-ribose 5-phosphate (dRib-5-P) and ribose 5-phosphate (Rib-5-P), respectively. This is Phosphopentomutase from Methylorubrum extorquens (strain CM4 / NCIMB 13688) (Methylobacterium extorquens).